Here is a 97-residue protein sequence, read N- to C-terminus: Protein CYSTEINE-RICH TRANSMEMBRANE MODULE 7 (97 aa).

Positions 1 to 27 (MASYHVSHDSYQSPGPSPLYQPIIEAP) are disordered. The span at 15-27 (GPSPLYQPIIEAP) shows a compositional bias: pro residues. Residues 68–88 (YVGCFPFLRSCLTTLCCCWFV) form a helical membrane-spanning segment.

This sequence belongs to the CYSTM1 family. As to quaternary structure, homodimer and heterodimers. Interacts with CYSTM3, CYSTM4, CYSTM5, CYSTM6, CYSTM10, WIH1/CYSTM13 and CYSTM11. Binds weakly to CYSTM1, CYSTM2 and CYSTM12. In terms of tissue distribution, mostly expressed in siliques and, to a lower extent, in stems, roots, leaves and flowers.

The protein resides in the cell membrane. Its function is as follows. Involved in resistance to abiotic stress. This chain is Protein CYSTEINE-RICH TRANSMEMBRANE MODULE 7, found in Arabidopsis thaliana (Mouse-ear cress).